We begin with the raw amino-acid sequence, 355 residues long: UDP-3-O-acylglucosamine N-acyltransferase (355 aa).

His-258 acts as the Proton acceptor in catalysis.

The protein belongs to the transferase hexapeptide repeat family. LpxD subfamily. As to quaternary structure, homotrimer.

It catalyses the reaction a UDP-3-O-[(3R)-3-hydroxyacyl]-alpha-D-glucosamine + a (3R)-hydroxyacyl-[ACP] = a UDP-2-N,3-O-bis[(3R)-3-hydroxyacyl]-alpha-D-glucosamine + holo-[ACP] + H(+). Its pathway is bacterial outer membrane biogenesis; LPS lipid A biosynthesis. Its function is as follows. Catalyzes the N-acylation of UDP-3-O-acylglucosamine using 3-hydroxyacyl-ACP as the acyl donor. Is involved in the biosynthesis of lipid A, a phosphorylated glycolipid that anchors the lipopolysaccharide to the outer membrane of the cell. This is UDP-3-O-acylglucosamine N-acyltransferase from Bradyrhizobium diazoefficiens (strain JCM 10833 / BCRC 13528 / IAM 13628 / NBRC 14792 / USDA 110).